The primary structure comprises 237 residues: LexA repressor (237 aa).

The H-T-H motif DNA-binding region spans 26-46; it reads FDEMKDALGLKSKSGIHRLIT. Residues serine 158 and lysine 196 each act as for autocatalytic cleavage activity in the active site.

It belongs to the peptidase S24 family. As to quaternary structure, homodimer.

The enzyme catalyses Hydrolysis of Ala-|-Gly bond in repressor LexA.. Its function is as follows. Represses a number of genes involved in the response to DNA damage (SOS response), including recA and lexA. In the presence of single-stranded DNA, RecA interacts with LexA causing an autocatalytic cleavage which disrupts the DNA-binding part of LexA, leading to derepression of the SOS regulon and eventually DNA repair. The polypeptide is LexA repressor (Rhodospirillum centenum (strain ATCC 51521 / SW)).